Reading from the N-terminus, the 452-residue chain is UPF0210 protein PTH_0987 (452 aa).

The protein belongs to the UPF0210 family. Homodimer.

This Pelotomaculum thermopropionicum (strain DSM 13744 / JCM 10971 / SI) protein is UPF0210 protein PTH_0987.